The sequence spans 159 residues: Ribosomal RNA large subunit methyltransferase H (159 aa).

Residues glycine 108 and 127–132 (FSKMTF) contribute to the S-adenosyl-L-methionine site.

Belongs to the RNA methyltransferase RlmH family. Homodimer.

The protein localises to the cytoplasm. It catalyses the reaction pseudouridine(1915) in 23S rRNA + S-adenosyl-L-methionine = N(3)-methylpseudouridine(1915) in 23S rRNA + S-adenosyl-L-homocysteine + H(+). Functionally, specifically methylates the pseudouridine at position 1915 (m3Psi1915) in 23S rRNA. The sequence is that of Ribosomal RNA large subunit methyltransferase H from Clostridium acetobutylicum (strain ATCC 824 / DSM 792 / JCM 1419 / IAM 19013 / LMG 5710 / NBRC 13948 / NRRL B-527 / VKM B-1787 / 2291 / W).